We begin with the raw amino-acid sequence, 518 residues long: Myosin-binding protein 7 (518 aa).

One can recognise a GTD-binding domain in the interval 69–167 (NELELLRETV…ALTFEAQAYK (99 aa)). Residues 276-350 (VVGQSPRHQR…DSSEIGDNDM (75 aa)) are disordered. The span at 291–301 (STGSASSLLGT) shows a compositional bias: low complexity. Residues 310 to 320 (SNDSPRSNNGS) are compositionally biased toward polar residues. The residue at position 385 (Ser-385) is a Phosphoserine. Positions 399-431 (EISKLYMRLQALEADRESMRQAIMSMRTEKAQM) form a coiled coil. A helical transmembrane segment spans residues 458-477 (IIGAFNFISVFKWITSFVFW).

As to quaternary structure, interacts with myosin XI-I.

It is found in the endomembrane system. Its function is as follows. Membrane-anchored myosin receptors that define a distinct, plant-specific transport vesicle compartment. In Arabidopsis thaliana (Mouse-ear cress), this protein is Myosin-binding protein 7.